The following is a 490-amino-acid chain: Serine/threonine-protein kinase PBL35 (490 aa).

Disordered stretches follow at residues 1-39 (MGFD…RNSE) and 80-103 (SAIV…SNAE). Residues 14-39 (SKTSNENEKKKKKRRRKKNNNVRNSE) are a coiled coil. Residues 23–33 (KKKKRRRKKNN) show a composition bias toward basic residues. The span at 94–103 (SSTTTTSNAE) shows a compositional bias: low complexity. The 287-residue stretch at 136-422 (FRPESLLGEG…VEVLKPLPHL (287 aa)) folds into the Protein kinase domain. Residues 142-150 (LGEGGFGCV) and Lys174 contribute to the ATP site. Tyr219 is subject to Phosphotyrosine. The active-site Proton acceptor is Asp269. Phosphoserine occurs at positions 273 and 303. A phosphothreonine mark is found at Thr304 and Thr309. Phosphotyrosine is present on Tyr317. The tract at residues 442-490 (AGSGSGSGRGFGSRNGQPVFRTLSSPHGQAGSSPYRHQIPSPKPKGATT) is disordered. Positions 444–454 (SGSGSGRGFGS) are enriched in gly residues. Residues 463 to 473 (TLSSPHGQAGS) are compositionally biased toward polar residues.

The protein belongs to the protein kinase superfamily. Ser/Thr protein kinase family. Interacts with SD129. Phosphorylated by SD129 in response to the pathogen-associated molecular pattern (PAMP) 3-OH-C10:0, a medium-chain 3-hydroxy fatty acid.

The protein resides in the cell membrane. The enzyme catalyses L-seryl-[protein] + ATP = O-phospho-L-seryl-[protein] + ADP + H(+). It catalyses the reaction L-threonyl-[protein] + ATP = O-phospho-L-threonyl-[protein] + ADP + H(+). Involved in chitin-triggered immune signaling and is required for reactive oxygen species (ROS) production. Acts downstream of SD129 in defense signaling triggered by the pathogen-associated molecular pattern (PAMP) 3-OH-C10:0, a medium-chain 3-hydroxy fatty acid. The polypeptide is Serine/threonine-protein kinase PBL35 (Arabidopsis thaliana (Mouse-ear cress)).